Consider the following 88-residue polypeptide: UPF0297 protein BPUM_2379 (88 aa).

It belongs to the UPF0297 family.

This is UPF0297 protein BPUM_2379 from Bacillus pumilus (strain SAFR-032).